The primary structure comprises 1040 residues: Multidrug resistance protein MdtB (1040 aa).

The next 12 helical transmembrane spans lie at 16-36 (FIMR…AGII), 342-362 (DTQF…YVFL), 369-389 (IIPA…MVFL), 396-416 (LTLM…IVVI), 440-460 (IGFT…PLLF), 472-492 (FAVT…TLTP), 537-557 (WATL…WIVI), 869-889 (LIVA…ESFI), 890-910 (HPVT…LALM), 911-931 (LSGS…IGIV), 968-988 (ILMT…STGV), and 998-1018 (IGMV…TPVI).

This sequence belongs to the resistance-nodulation-cell division (RND) (TC 2.A.6) family. MdtB subfamily. In terms of assembly, part of a tripartite efflux system composed of MdtA, MdtB and MdtC. MdtB forms a heteromultimer with MdtC.

It is found in the cell inner membrane. This chain is Multidrug resistance protein MdtB, found in Enterobacter sp. (strain 638).